Here is a 30-residue protein sequence, read N- to C-terminus: Uperin-6.1 (30 aa).

In terms of tissue distribution, expressed by the skin dorsal glands.

The protein localises to the secreted. The protein is Uperin-6.1 of Uperoleia inundata (Floodplain toadlet).